Here is a 461-residue protein sequence, read N- to C-terminus: Ornithine decarboxylase (461 aa).

Lys69 is subject to N6-(pyridoxal phosphate)lysine. Residues Ser200, Gly237, and Glu274–Arg277 contribute to the pyridoxal 5'-phosphate site. Ser303 carries the post-translational modification Phosphoserine; by CK2. Tyr331–Asp332 contributes to the substrate binding site. The active-site Proton donor; shared with dimeric partner is the Cys360. Position 360 is an S-nitrosocysteine (Cys360). Asp361 is a binding site for substrate. Position 389 (Tyr389) interacts with pyridoxal 5'-phosphate.

This sequence belongs to the Orn/Lys/Arg decarboxylase class-II family. In terms of assembly, homodimer. Only the dimer is catalytically active, as the active sites are constructed of residues from both monomers. The cofactor is pyridoxal 5'-phosphate.

It carries out the reaction L-ornithine + H(+) = putrescine + CO2. The protein operates within amine and polyamine biosynthesis; putrescine biosynthesis via L-ornithine pathway; putrescine from L-ornithine: step 1/1. Inhibited by antizymes (AZs) OAZ1, OAZ2 and OAZ3 in response to polyamine levels. AZs inhibit the assembly of the functional homodimer by binding to ODC monomers. Additionally, OAZ1 targets ODC monomers for ubiquitin-independent proteolytic destruction by the 26S proteasome. Its function is as follows. Catalyzes the first and rate-limiting step of polyamine biosynthesis that converts ornithine into putrescine, which is the precursor for the polyamines, spermidine and spermine. Polyamines are essential for cell proliferation and are implicated in cellular processes, ranging from DNA replication to apoptosis. The chain is Ornithine decarboxylase (ODC1) from Bos taurus (Bovine).